The following is a 78-amino-acid chain: Major outer membrane lipoprotein Lpp (78 aa).

Residues 1 to 19 (MKAKIVLGAVILASGLLAG) form the signal peptide. The N-palmitoyl cysteine moiety is linked to residue C20. The S-diacylglycerol cysteine moiety is linked to residue C20. 2 consecutive repeats follow at residues 25–35 (NAQLDQISSDV) and 39–49 (NTQVQQLSSDV). The stretch at 28–62 (LDQISSDVNRLNTQVQQLSSDVQSANAQAKAAYEA) forms a coiled coil. K78 is subject to N6-murein peptidoglycan lysine.

It belongs to the Lpp family. Homotrimer.

Its subcellular location is the cell outer membrane. It is found in the secreted. The protein localises to the cell wall. A highly abundant outer membrane lipoprotein that controls the distance between the inner and outer membranes. The only protein known to be covalently linked to the peptidoglycan network (PGN). Also non-covalently binds the PGN. The link between the cell outer membrane and PGN contributes to maintenance of the structural and functional integrity of the cell envelope, and maintains the correct distance between the PGN and the outer membrane. The sequence is that of Major outer membrane lipoprotein Lpp from Proteus mirabilis.